The primary structure comprises 254 residues: MALTNKNIIFVAGLGGIGLDTSRELVKRDLKNLVILDRIDNPAAIAELKAINPKVTVTFYPYDVTTPLTETTKLLKTIFAQLKTVDVLINGAGILDDHQIERTIAVNFTGLVNTTTAILDFWDKRKGGPGGVICNIGSVTGFNAIYQVPVYSASKAAVVSFTQSIAKLANVTGVTAFTVNPGITKTTLVHKFNSWLDVETRVAEKLLEHPTQTTLACAQNFVKAIELNKNGAIWKLDLGTLEPIEWTKHWDSGI.

9–32 (IFVAGLGGIGLDTSRELVKRDLKN) serves as a coordination point for NAD(+). Serine 138 is a substrate binding site. Residue tyrosine 151 is the Proton acceptor of the active site.

Belongs to the short-chain dehydrogenases/reductases (SDR) family. In terms of assembly, homodimer.

It carries out the reaction a primary alcohol + NAD(+) = an aldehyde + NADH + H(+). It catalyses the reaction a secondary alcohol + NAD(+) = a ketone + NADH + H(+). This is Alcohol dehydrogenase (Adh) from Drosophila paulistorum (Fruit fly).